Consider the following 179-residue polypeptide: Orotate phosphoribosyltransferase (179 aa).

5-phospho-alpha-D-ribose 1-diphosphate is bound by residues R94, K95, K98, H100, and 120-128; that span reads EDTSTTGNS. Orotate contacts are provided by T124 and R152.

Belongs to the purine/pyrimidine phosphoribosyltransferase family. PyrE subfamily. In terms of assembly, homodimer. Mg(2+) is required as a cofactor.

It carries out the reaction orotidine 5'-phosphate + diphosphate = orotate + 5-phospho-alpha-D-ribose 1-diphosphate. The protein operates within pyrimidine metabolism; UMP biosynthesis via de novo pathway; UMP from orotate: step 1/2. In terms of biological role, catalyzes the transfer of a ribosyl phosphate group from 5-phosphoribose 1-diphosphate to orotate, leading to the formation of orotidine monophosphate (OMP). In Mycobacterium bovis (strain ATCC BAA-935 / AF2122/97), this protein is Orotate phosphoribosyltransferase.